A 613-amino-acid chain; its full sequence is Myrcene synthase, chloroplastic (613 aa).

The N-terminal 46 residues, 1–46 (MQCMAVHQFAPLLSLLNCSRISSDFGRLFTPKTSTKSRSSTCHPIQ), are a transit peptide targeting the chloroplast. Positions 324, 361, and 365 each coordinate (2E)-geranyl diphosphate. Mg(2+) is bound by residues aspartate 361 and aspartate 365. Residues 361 to 365 (DDIYD) carry the DDXXD motif motif. The chain crosses the membrane as a helical span at residues 455 to 475 (IEMAWLSIGGPVILVHAYFCF). Residues arginine 503 and aspartate 506 each coordinate (2E)-geranyl diphosphate. Aspartate 506, threonine 510, and glutamate 514 together coordinate Mg(2+).

It belongs to the terpene synthase family. Tpsb subfamily. Mg(2+) serves as cofactor. It depends on Mn(2+) as a cofactor. As to expression, expressed in trichomes.

The protein localises to the plastid. It is found in the chloroplast membrane. The catalysed reaction is (2E)-geranyl diphosphate = beta-myrcene + diphosphate. The protein operates within secondary metabolite biosynthesis; terpenoid biosynthesis. Functionally, monoterpene synthase that catalyzes the formation of myrcene. Can use geranyl diphosphate as substrate, but not farnesyl diphosphate or geranylgeranyl diphosphate. In Humulus lupulus (European hop), this protein is Myrcene synthase, chloroplastic.